A 542-amino-acid chain; its full sequence is Putative sodium-dependent excitatory amino acid transporter glt-6 (542 aa).

Over 1–15 (MKSKRRDDIVQFCRE) the chain is Cytoplasmic. 3 helical membrane-spanning segments follow: residues 16–36 (NTLLVMTMFSVFLGVVLGFGL), 55–75 (IFMQVLKMMILPLIFSSLISA), and 93–113 (LYYLSTAVLATILGIFLVTVI). The Extracellular segment spans residues 114–191 (HPGDPSIKGT…IVKRSIGMTK (78 aa)). An N-linked (GlcNAc...) asparagine glycan is attached at Asn-175. 5 helical membrane passes run 192-212 (GMNILGIIVFCTGFGIVISQL), 234-254 (VVTLMWFAPLGITCLICGNLL), 265-285 (VLALYVFTVCAGLILHTIITV), 303-323 (GMIQAAVTAFGTASGGATLPM), and 386-406 (TIASIGLGSVPAGLVSILLIL). Over residues 505–517 (RIGSRIGSRRPSS) the composition is skewed to low complexity. Positions 505–542 (RIGSRIGSRRPSSTNLHLSWRNNNIEPPYTPLPNDENV) are disordered. Over residues 518 to 529 (TNLHLSWRNNNI) the composition is skewed to polar residues.

Belongs to the dicarboxylate/amino acid:cation symporter (DAACS) (TC 2.A.23) family.

It localises to the membrane. This Caenorhabditis elegans protein is Putative sodium-dependent excitatory amino acid transporter glt-6 (glt-6).